Reading from the N-terminus, the 876-residue chain is DNA mismatch repair protein MutS (876 aa).

Glycine 626–serine 633 contributes to the ATP binding site. Residues phenylalanine 829 to proline 856 are disordered. Pro residues predominate over residues alanine 832–proline 841.

This sequence belongs to the DNA mismatch repair MutS family.

In terms of biological role, this protein is involved in the repair of mismatches in DNA. It is possible that it carries out the mismatch recognition step. This protein has a weak ATPase activity. The protein is DNA mismatch repair protein MutS of Cereibacter sphaeroides (strain ATCC 17025 / ATH 2.4.3) (Rhodobacter sphaeroides).